Consider the following 269-residue polypeptide: Putative pyruvate, phosphate dikinase regulatory protein (269 aa).

147–154 is a binding site for ADP; sequence GLSRTSKT.

The protein belongs to the pyruvate, phosphate/water dikinase regulatory protein family. PDRP subfamily.

It catalyses the reaction N(tele)-phospho-L-histidyl/L-threonyl-[pyruvate, phosphate dikinase] + ADP = N(tele)-phospho-L-histidyl/O-phospho-L-threonyl-[pyruvate, phosphate dikinase] + AMP + H(+). It carries out the reaction N(tele)-phospho-L-histidyl/O-phospho-L-threonyl-[pyruvate, phosphate dikinase] + phosphate + H(+) = N(tele)-phospho-L-histidyl/L-threonyl-[pyruvate, phosphate dikinase] + diphosphate. In terms of biological role, bifunctional serine/threonine kinase and phosphorylase involved in the regulation of the pyruvate, phosphate dikinase (PPDK) by catalyzing its phosphorylation/dephosphorylation. This chain is Putative pyruvate, phosphate dikinase regulatory protein, found in Clostridium botulinum (strain 657 / Type Ba4).